Consider the following 735-residue polypeptide: E3 UFM1-protein ligase 1 homolog (735 aa).

The segment at 389–445 (RLEAEKKKQGGAKAAVKVQEETDDWGDGKKGGKGGKKNAKSVKGGSKSSAPSTSSNL) is disordered. The span at 419 to 428 (GGKGGKKNAK) shows a compositional bias: basic residues. A compositionally biased stretch (low complexity) spans 429 to 445 (SVKGGSKSSAPSTSSNL).

It belongs to the UFL1 family.

In terms of biological role, E3 UFM1-protein ligase that mediates ufmylation of target proteins. This Caenorhabditis elegans protein is E3 UFM1-protein ligase 1 homolog (ufl-1).